The following is a 93-amino-acid chain: Acylphosphatase (93 aa).

Positions Arg-6–Phe-93 constitute an Acylphosphatase-like domain. Active-site residues include Arg-21 and Asn-39.

The protein belongs to the acylphosphatase family.

It catalyses the reaction an acyl phosphate + H2O = a carboxylate + phosphate + H(+). This chain is Acylphosphatase (acyP), found in Anaeromyxobacter dehalogenans (strain 2CP-C).